A 142-amino-acid polypeptide reads, in one-letter code: Large ribosomal subunit protein bL17 (142 aa).

Belongs to the bacterial ribosomal protein bL17 family. In terms of assembly, part of the 50S ribosomal subunit. Contacts protein L32.

This chain is Large ribosomal subunit protein bL17, found in Rickettsia bellii (strain OSU 85-389).